Here is a 330-residue protein sequence, read N- to C-terminus: MQNLTSTFVSPSMIPITSPRLRLPPPRSVVPMTTVCMEQSYKQKVVVIMGATGSGKSCLSIDLATRFSGEIVNSDKIQFYDGLKVTTNQMSILERCGVPHHLLGELPPDDSELTTSEFRSLASRSISEITARGNLPIIAGGSNSFIHALLVDRFDPKTYPFSSETSISSGLRYECCFLWVDVSVSVLFEYLSKRVDQMMESGMFEELAGFYDPRYSGSAIRAHGIHKTIGIPEFDRYFSLYPPERKQKMSEWDQARKGAYDEAVQEIKENTWRLAKKQIERIMKLKSSGWDIQRLDATPSFGRSSREIWDNTVLDESIKVVKRFLVKDKV.

Residues 1–35 (MQNLTSTFVSPSMIPITSPRLRLPPPRSVVPMTTV) constitute a chloroplast transit peptide. An ATP-binding site is contributed by 50 to 57 (GATGSGKS).

It belongs to the IPP transferase family. As to expression, expressed in roots and in immature seeds with highest expression in the chalazal endosperm.

Its subcellular location is the plastid. The protein localises to the chloroplast. The catalysed reaction is dimethylallyl diphosphate + ADP = N(6)-(dimethylallyl)adenosine 5'-diphosphate + diphosphate. It catalyses the reaction dimethylallyl diphosphate + ATP = N(6)-(dimethylallyl)adenosine 5'-triphosphate + diphosphate. In terms of biological role, involved in cytokinin biosynthesis. Catalyzes the transfer of an isopentenyl group from dimethylallyl diphosphate (DMAPP) to ATP and ADP. This chain is Adenylate isopentenyltransferase 8, chloroplastic (IPT8), found in Arabidopsis thaliana (Mouse-ear cress).